Consider the following 238-residue polypeptide: uncharacterized protein (238 aa).

The region spanning 1 to 68 (MIYKSIAERL…HGSGTYLVRK (68 aa)) is the HTH gntR-type domain. A DNA-binding region (H-T-H motif) is located at residues 28 to 47 (EKKLAEEFAVSRMTIRKAID).

This is an uncharacterized protein from Escherichia coli (strain K12).